The chain runs to 78 residues: uncharacterized protein (78 aa).

Residues 44–66 traverse the membrane as a helical segment; sequence ALYSLGFFLCTTIVIFSNIKFVV.

It belongs to the TatC family.

The protein resides in the plastid. Its subcellular location is the chloroplast membrane. This is an uncharacterized protein from Dictyota dichotoma.